The primary structure comprises 140 residues: MLMPKRVKYRKLQRGRRTGTATRGSKISFGEYGLQAEECGWITARQIEAARIAITRHVRRGGKIWIRIFPHKSITKKPAETRMGKGKGAPEEWVAVVKPGTVLYEMQGVSKEVAREAFRLASHKLPIGTRFLSRELTDEG.

This sequence belongs to the universal ribosomal protein uL16 family. In terms of assembly, part of the 50S ribosomal subunit.

Its function is as follows. Binds 23S rRNA and is also seen to make contacts with the A and possibly P site tRNAs. In Syntrophus aciditrophicus (strain SB), this protein is Large ribosomal subunit protein uL16.